The following is a 288-amino-acid chain: Acetyl-coenzyme A carboxylase carboxyl transferase subunit beta (288 aa).

Residues 32 to 288 (LFAKCPACKH…LELHTEVENV (257 aa)) form the CoA carboxyltransferase N-terminal domain. 4 residues coordinate Zn(2+): Cys36, Cys39, Cys54, and Cys57. Residues 36–57 (CPACKHTIYQKDLGKNKVCPNC) form a C4-type zinc finger.

Belongs to the AccD/PCCB family. Acetyl-CoA carboxylase is a heterohexamer composed of biotin carboxyl carrier protein (AccB), biotin carboxylase (AccC) and two subunits each of ACCase subunit alpha (AccA) and ACCase subunit beta (AccD). The cofactor is Zn(2+).

It is found in the cytoplasm. It carries out the reaction N(6)-carboxybiotinyl-L-lysyl-[protein] + acetyl-CoA = N(6)-biotinyl-L-lysyl-[protein] + malonyl-CoA. It participates in lipid metabolism; malonyl-CoA biosynthesis; malonyl-CoA from acetyl-CoA: step 1/1. In terms of biological role, component of the acetyl coenzyme A carboxylase (ACC) complex. Biotin carboxylase (BC) catalyzes the carboxylation of biotin on its carrier protein (BCCP) and then the CO(2) group is transferred by the transcarboxylase to acetyl-CoA to form malonyl-CoA. The sequence is that of Acetyl-coenzyme A carboxylase carboxyl transferase subunit beta from Lactococcus lactis subsp. cremoris (strain MG1363).